Here is a 614-residue protein sequence, read N- to C-terminus: Putative N(6)-adenosine-methyltransferase MT-A70-like (614 aa).

The disordered stretch occupies residues 59-78; the sequence is TPPLTNFNPPKSSSLQQLPQ. Positions 67-78 are enriched in low complexity; that stretch reads PPKSSSLQQLPQ. S-adenosyl-L-methionine is bound by residues 391-392 and Asp409; that span reads DI. Residues 479–492 form a positively charged region required for RNA-binding region; it reads RIIRTGRTGHWLNH. S-adenosyl-L-methionine is bound by residues Lys526, 549–552, and 562–563; these read RMHN and NQ. Residues 589 to 614 are disordered; sequence PASPSRASAMELDSSVAAQTTTSAMM. Polar residues predominate over residues 604–614; that stretch reads VAAQTTTSAMM.

This sequence belongs to the MT-A70-like family.

It localises to the nucleus. The enzyme catalyses an adenosine in mRNA + S-adenosyl-L-methionine = an N(6)-methyladenosine in mRNA + S-adenosyl-L-homocysteine + H(+). In terms of biological role, putative N6-methyltransferase that methylates adenosine residues of some mRNAs. N6-methyladenosine (m6A), which is present at internal sites of some mRNAs, may play a role in the efficiency of mRNA splicing, transport or translation. This is Putative N(6)-adenosine-methyltransferase MT-A70-like from Medicago truncatula (Barrel medic).